The chain runs to 175 residues: Thioredoxin-like protein CITRX, chloroplastic (175 aa).

The transit peptide at 1–64 directs the protein to the chloroplast; that stretch reads MQAASLAFHP…KPPAVGKYVR (64 aa). In terms of domain architecture, Thioredoxin spans 74 to 175; sequence AKEIQELIKG…MMRDIIDNDL (102 aa). Catalysis depends on nucleophile residues cysteine 98 and cysteine 101. Cysteine 98 and cysteine 101 are disulfide-bonded.

Belongs to the thioredoxin family. Plant CITRX-type subfamily. As to quaternary structure, interacts with Cf-9 resistance protein.

Its subcellular location is the plastid. It localises to the chloroplast. Probable thiol-disulfide oxidoreductase that may play a role in proper chloroplast development. This is Thioredoxin-like protein CITRX, chloroplastic from Solanum lycopersicum (Tomato).